A 509-amino-acid chain; its full sequence is Steroid 17-alpha-hydroxylase/17,20 lyase (509 aa).

Substrate is bound at residue asparagine 202. Residue cysteine 442 participates in heme binding.

Belongs to the cytochrome P450 family. Heme serves as cofactor.

It is found in the endoplasmic reticulum membrane. The protein resides in the microsome membrane. It catalyses the reaction a C21-steroid + reduced [NADPH--hemoprotein reductase] + O2 = a 17alpha-hydroxy-C21-steroid + oxidized [NADPH--hemoprotein reductase] + H2O + H(+). It carries out the reaction progesterone + reduced [NADPH--hemoprotein reductase] + O2 = 17alpha-hydroxyprogesterone + oxidized [NADPH--hemoprotein reductase] + H2O + H(+). The enzyme catalyses pregnenolone + reduced [NADPH--hemoprotein reductase] + O2 = 17alpha-hydroxypregnenolone + oxidized [NADPH--hemoprotein reductase] + H2O + H(+). The catalysed reaction is 17alpha-hydroxyprogesterone + reduced [NADPH--hemoprotein reductase] + O2 = androst-4-ene-3,17-dione + acetate + oxidized [NADPH--hemoprotein reductase] + H2O + 2 H(+). It catalyses the reaction 17alpha-hydroxyprogesterone + reduced [NADPH--hemoprotein reductase] + O2 = 16alpha,17alpha-dihydroxyprogesterone + oxidized [NADPH--hemoprotein reductase] + H2O + H(+). It carries out the reaction 16alpha,17alpha-dihydroxyprogesterone + reduced [NADPH--hemoprotein reductase] + O2 = 6beta,16alpha,17alpha-trihydroxyprogesterone + oxidized [NADPH--hemoprotein reductase] + H2O + H(+). The enzyme catalyses 17alpha-hydroxypregnenolone + reduced [NADPH--hemoprotein reductase] + O2 = 3beta-hydroxyandrost-5-en-17-one + acetate + oxidized [NADPH--hemoprotein reductase] + H2O + 2 H(+). The catalysed reaction is 16alpha,17alpha-dihydroxypregnenolone + reduced [NADPH--hemoprotein reductase] + O2 = 3beta,16alpha-dihydroxy-androst-5-en-17-one + acetate + oxidized [NADPH--hemoprotein reductase] + H2O + 2 H(+). It catalyses the reaction 3beta-hydroxyandrost-5-en-17-one + reduced [NADPH--hemoprotein reductase] + O2 = 3beta,16alpha-dihydroxy-androst-5-en-17-one + oxidized [NADPH--hemoprotein reductase] + H2O + H(+). It carries out the reaction androst-4-ene-3,17-dione + reduced [NADPH--hemoprotein reductase] + O2 = 16alpha-hydroxyandrost-4-ene-3,17-dione + oxidized [NADPH--hemoprotein reductase] + H2O + H(+). Its pathway is steroid hormone biosynthesis. It participates in steroid biosynthesis; glucocorticoid biosynthesis. Regulated predominantly by intracellular cAMP levels. The 17,20-lyase activity is stimulated by cytochrome b5, which acts as an allosteric effector increasing the Vmax of the lyase activity. Its function is as follows. A cytochrome P450 monooxygenase involved in corticoid and androgen biosynthesis. Catalyzes 17-alpha hydroxylation of C21 steroids, which is common for both pathways. A second oxidative step, required only for androgen synthesis, involves an acyl-carbon cleavage. The 17-alpha hydroxy intermediates, as part of adrenal glucocorticoids biosynthesis pathway, are precursors of cortisol. Hydroxylates steroid hormones, pregnenolone and progesterone to form 17-alpha hydroxy metabolites, followed by the cleavage of the C17-C20 bond to form C19 steroids, dehydroepiandrosterone (DHEA) and androstenedione. Has 16-alpha hydroxylase activity. Catalyzes 16-alpha hydroxylation of 17-alpha hydroxy pregnenolone, followed by the cleavage of the C17-C20 bond to form 16-alpha-hydroxy DHEA. Also 16-alpha hydroxylates androgens, relevant for estriol synthesis. Mechanistically, uses molecular oxygen inserting one oxygen atom into a substrate, and reducing the second into a water molecule, with two electrons provided by NADPH via cytochrome P450 reductase (CPR; NADPH-ferrihemoprotein reductase). This is Steroid 17-alpha-hydroxylase/17,20 lyase (CYP17A1) from Bison bison (American bison).